A 197-amino-acid chain; its full sequence is MKLLEDRIHTDGQVLGQDILKVDRFLTHQVDYQLMKEIGKRFAQVYANAGVTKVVTIEASGIAPALYAAESLNVPMIFAKKAKNVTMNDDLLITEVYSFTKKLTSTVQISSKLIEEGDKVLIIDDFLANGQAALGLVHLMEQAKAEVVGLGMVIEKSFQDGRQKLLDQGMKLTSLARIEKFEDGKVIFAPADDKDFD.

Residues leucine 20 and threonine 27 each contribute to the xanthine site. 128 to 132 (ANGQA) serves as a coordination point for 5-phospho-alpha-D-ribose 1-diphosphate. A xanthine-binding site is contributed by lysine 156.

Belongs to the purine/pyrimidine phosphoribosyltransferase family. Xpt subfamily. Homodimer.

The protein resides in the cytoplasm. The catalysed reaction is XMP + diphosphate = xanthine + 5-phospho-alpha-D-ribose 1-diphosphate. Its pathway is purine metabolism; XMP biosynthesis via salvage pathway; XMP from xanthine: step 1/1. Functionally, converts the preformed base xanthine, a product of nucleic acid breakdown, to xanthosine 5'-monophosphate (XMP), so it can be reused for RNA or DNA synthesis. In Lactococcus lactis subsp. lactis (strain IL1403) (Streptococcus lactis), this protein is Xanthine phosphoribosyltransferase.